The sequence spans 741 residues: Catalase-peroxidase 2 (741 aa).

The N-terminal stretch at 1-28 is a signal peptide; that stretch reads MQKKRIGKSVVAALAIIAMSAGTVAAWA. The segment at residues 107-228 is a cross-link (tryptophyl-tyrosyl-methioninium (Trp-Tyr) (with M-254)); sequence WHGAGTYRTY…LAATQMGLIY (122 aa). His108 functions as the Proton acceptor in the catalytic mechanism. Residues 228–254 constitute a cross-link (tryptophyl-tyrosyl-methioninium (Tyr-Met) (with W-107)); that stretch reads YVNPEGPNGNPDPVAAAKDIREAFGRM. His269 lines the heme b pocket.

Belongs to the peroxidase family. Peroxidase/catalase subfamily. As to quaternary structure, homodimer or homotetramer. Heme b is required as a cofactor. Formation of the three residue Trp-Tyr-Met cross-link is important for the catalase, but not the peroxidase activity of the enzyme.

The catalysed reaction is H2O2 + AH2 = A + 2 H2O. It catalyses the reaction 2 H2O2 = O2 + 2 H2O. In terms of biological role, bifunctional enzyme with both catalase and broad-spectrum peroxidase activity. This Burkholderia ambifaria (strain MC40-6) protein is Catalase-peroxidase 2.